Reading from the N-terminus, the 239-residue chain is Zinc finger protein 575 (239 aa).

Positions 1–62 (MLGGSVKSEV…PQRPHRCPDC (62 aa)) are disordered. A compositionally biased stretch (basic and acidic residues) spans 22–31 (PETKAPHQDL). A compositionally biased stretch (basic residues) spans 46 to 57 (RPRRRPPPQRPH). 6 C2H2-type zinc fingers span residues 57–79 (HRCP…RLAH), 85–107 (HPCP…RLTH), 113–135 (HSCP…LWTH), 141–163 (YPCP…RHTH), 171–193 (YPCP…RLCH), and 207–230 (HRCS…RSHH).

This sequence belongs to the krueppel C2H2-type zinc-finger protein family.

It localises to the nucleus. Its function is as follows. May be involved in transcriptional regulation. In Mus musculus (Mouse), this protein is Zinc finger protein 575 (Znf575).